The following is a 28-amino-acid chain: MCICKNGKPLPGFIGKICRKICMMQQTH.

Cystine bridges form between cysteine 2–cysteine 18 and cysteine 4–cysteine 22.

In terms of tissue distribution, expressed by the venom gland.

The protein localises to the secreted. In terms of biological role, mast cell degranulating peptide. The polypeptide is Mast cell degranulating peptide (Bombus pensylvanicus (American bumblebee)).